The sequence spans 411 residues: UPF0761 membrane protein PLES_43641 (411 aa).

6 consecutive transmembrane segments (helical) span residues 36 to 56, 92 to 112, 132 to 152, 174 to 194, 207 to 229, and 244 to 264; these read LFAV…IPAF, HLTW…LVTI, FLLY…GFAV, LLGL…YSAV, GGVF…VSLF, and IFLL…VLVC.

The protein belongs to the UPF0761 family.

The protein localises to the cell inner membrane. The sequence is that of UPF0761 membrane protein PLES_43641 from Pseudomonas aeruginosa (strain LESB58).